The sequence spans 467 residues: Putative pentatricopeptide repeat-containing protein At1g10330 (467 aa).

10 PPR repeats span residues 50-84 (TKCV…HVQP), 85-119 (NNLT…GFLW), 120-150 (DPFV…ILNP), 151-181 (CVVA…MPVT), 182-216 (DVVS…ERAV), 220-256 (NEAT…EIIL), 257-287 (TTTL…IRDK), 288-322 (KVCA…YVHP), 323-358 (NGIT…KIIP), and 359-389 (TSEH…LPFE). The segment at 394–467 (VLGALLGACK…RKIPAYSVLT (74 aa)) is type E motif; degenerate.

It belongs to the PPR family. PCMP-E subfamily.

The protein is Putative pentatricopeptide repeat-containing protein At1g10330 (PCMP-E71) of Arabidopsis thaliana (Mouse-ear cress).